The chain runs to 301 residues: MAHFTLDTFTFNKDVRKVSFGEYNIRPPLIKPSKLTYVENGGVGKELSDGWALNFAIGCIHACPFCYVDNIHKRFTFARVGDVVQRPWGMYFLKPRNIDEAIKKTPWKRWKGKLVMMSSTHDPYLPQLYPTSRKILEKALPAGVKFLIQTRSVLVTKDLDLLSEYKDQVILQVSIATLEEKFASIIEPRAPPPKARLEVLRKAKEVGLKVGVIVAPIFPPNKVREDVKEDLEMIMKELADIGVDQVFGEMLHERGMNMEYIESLLWEKVKIDKELDEELGKMFTELLNKYHLRGKWWYEKH.

Positions 45–286 (KELSDGWALN…EELGKMFTEL (242 aa)) constitute a Radical SAM core domain.

This is an uncharacterized protein from Acidianus two-tailed virus (ATV).